The following is a 158-amino-acid chain: MVPKLFTSQICLLLLLGLLGVEGSLHAAPQKFTRAQWFSIQHIQTTPLRCTNAMRAINKYQHRCKNQNTFLHTTFAAVVNVCGNTNITCPRNASLNNCHHSRVQVPLTYCNLTGPPTITNCVYSSTQANMFYVVACDNRDQRDPPQYPVVPVHLDTTI.

A signal peptide spans 1–27; sequence MVPKLFTSQICLLLLLGLLGVEGSLHA. Histidine 42 acts as the Proton acceptor in catalysis. 4 disulfides stabilise this stretch: cysteine 50–cysteine 110, cysteine 64–cysteine 121, cysteine 82–cysteine 136, and cysteine 89–cysteine 98. At tyrosine 60 the chain carries 3'-nitrotyrosine. Substrate is bound at residue 65–69; sequence KNQNT. 3 N-linked (GlcNAc...) asparagine glycosylation sites follow: asparagine 86, asparagine 92, and asparagine 111. Histidine 153 functions as the Proton donor in the catalytic mechanism.

It belongs to the pancreatic ribonuclease family. As to quaternary structure, interacts with and forms a tight 1:1 complex with RNH1. Dimerization of two such complexes may occur.

The protein localises to the lysosome. Its subcellular location is the cytoplasmic granule. It catalyses the reaction an [RNA] containing cytidine + H2O = an [RNA]-3'-cytidine-3'-phosphate + a 5'-hydroxy-ribonucleotide-3'-[RNA].. The enzyme catalyses an [RNA] containing uridine + H2O = an [RNA]-3'-uridine-3'-phosphate + a 5'-hydroxy-ribonucleotide-3'-[RNA].. In terms of biological role, this is a non-secretory ribonuclease. It is a pyrimidine specific nuclease with a slight preference for U. Cytotoxin and helminthotoxin. Possesses a wide variety of biological activities. The polypeptide is Non-secretory ribonuclease (RNASE2) (Aotus trivirgatus (Three-striped night monkey)).